Reading from the N-terminus, the 164-residue chain is Phosphopantetheine adenylyltransferase (164 aa).

S9 is a binding site for substrate. ATP contacts are provided by residues S9–F10 and H17. 3 residues coordinate substrate: K41, L73, and K87. Residues G88–R90, E98, and Y123–S129 contribute to the ATP site.

The protein belongs to the bacterial CoaD family. As to quaternary structure, homohexamer. It depends on Mg(2+) as a cofactor.

Its subcellular location is the cytoplasm. It catalyses the reaction (R)-4'-phosphopantetheine + ATP + H(+) = 3'-dephospho-CoA + diphosphate. Its pathway is cofactor biosynthesis; coenzyme A biosynthesis; CoA from (R)-pantothenate: step 4/5. In terms of biological role, reversibly transfers an adenylyl group from ATP to 4'-phosphopantetheine, yielding dephospho-CoA (dPCoA) and pyrophosphate. The sequence is that of Phosphopantetheine adenylyltransferase from Clostridium botulinum (strain ATCC 19397 / Type A).